The sequence spans 191 residues: Peptidyl-tRNA hydrolase (191 aa).

Residue Y16 coordinates tRNA. The active-site Proton acceptor is the H21. The tRNA site is built by Y67, N69, and N115.

Belongs to the PTH family. In terms of assembly, monomer.

The protein localises to the cytoplasm. The catalysed reaction is an N-acyl-L-alpha-aminoacyl-tRNA + H2O = an N-acyl-L-amino acid + a tRNA + H(+). Functionally, hydrolyzes ribosome-free peptidyl-tRNAs (with 1 or more amino acids incorporated), which drop off the ribosome during protein synthesis, or as a result of ribosome stalling. In terms of biological role, catalyzes the release of premature peptidyl moieties from peptidyl-tRNA molecules trapped in stalled 50S ribosomal subunits, and thus maintains levels of free tRNAs and 50S ribosomes. In Wigglesworthia glossinidia brevipalpis, this protein is Peptidyl-tRNA hydrolase.